The following is a 226-amino-acid chain: Urease accessory protein UreF (226 aa).

Belongs to the UreF family. In terms of assembly, ureD, UreF and UreG form a complex that acts as a GTP-hydrolysis-dependent molecular chaperone, activating the urease apoprotein by helping to assemble the nickel containing metallocenter of UreC. The UreE protein probably delivers the nickel.

The protein resides in the cytoplasm. Required for maturation of urease via the functional incorporation of the urease nickel metallocenter. The chain is Urease accessory protein UreF from Burkholderia cenocepacia (strain HI2424).